The sequence spans 438 residues: Innexin inx7 (438 aa).

Topologically, residues 1–23 (MLNTFSSVRQYLKFDLTRVVIDN) are cytoplasmic. The helical transmembrane segment at 24-44 (IVFKLHYRWTFVILLVATLLI) threads the bilayer. Residues 45 to 58 (TSRQYIGEHIQCLS) are Extracellular-facing. The chain crosses the membrane as a helical span at residues 59–79 (DGVVSPVINTFCFFTPTFTVV). The Cytoplasmic segment spans residues 80-112 (RDQNQTAYRPGSEPPGIGAFDPEKDTIKRHAYY). Residues 113 to 133 (QWVPFVLFFQALCFYIPHALW) form a helical membrane-spanning segment. The Extracellular portion of the chain corresponds to 134-283 (KSWEGGRIKA…VMALNIMNEK (150 aa)). Residues 284–304 (IYIILWFWYAFLLIVTVLGLL) form a helical membrane-spanning segment. The Cytoplasmic segment spans residues 305 to 438 (WRILTLCFYR…STSDMAKLPV (134 aa)). Disordered regions lie at residues 381–402 (NDVN…PELS) and 415–438 (RRNG…KLPV). The span at 418–431 (GSPSAGGAQGPSTS) shows a compositional bias: low complexity.

Belongs to the pannexin family. In terms of tissue distribution, expressed around gut lobes in embryonic stages 15-17.

Its subcellular location is the cell membrane. The protein localises to the cell junction. It localises to the gap junction. Its function is as follows. Structural components of the gap junctions. The protein is Innexin inx7 (Inx7) of Drosophila melanogaster (Fruit fly).